A 180-amino-acid polypeptide reads, in one-letter code: Non-structural protein 4 (180 aa).

2 helical membrane passes run 16-36 (VCVH…VTVI) and 52-72 (IVST…AILG).

The protein localises to the host membrane. The protein is Non-structural protein 4 (Segment-11) of Banna virus (BAV).